We begin with the raw amino-acid sequence, 225 residues long: Insulin-induced gene 2 protein (225 aa).

At 1–28 (MAENDAKPTLPKKSGPYISSVTSHGMNL) the chain is on the cytoplasmic side. Residues 29–51 (VIRGIVLFFIGVFLALVLNLLQI) traverse the membrane as a helical segment. At 52–70 (QRNVTLFPPDVITSIFSSA) the chain is on the lumenal side. A helical membrane pass occupies residues 71-88 (WWVPPCCGTASAVIGLLY). Over 89-103 (PCMDRHLGEPHKFKR) the chain is Cytoplasmic. Residues 104–126 (EWSSVMRCVAVFVGINHASAKVD) traverse the membrane as a helical segment. Residues 127–129 (FAN) lie on the Lumenal side of the membrane. Residues 130–148 (NIQLSLTLAALSIGLWWTF) traverse the membrane as a helical segment. Topologically, residues 149 to 153 (DRSRS) are cytoplasmic. A helical membrane pass occupies residues 154–175 (GFGLGVGIAFLATLVSQLLVYN). The Lumenal segment spans residues 176–189 (GVYQYTSPDFLYVR). A helical transmembrane segment spans residues 190–207 (SWLPCIFFAGGITMGNIG). Residues 208 to 225 (RQLAMYECKVIAEKSHED) lie on the Cytoplasmic side of the membrane. Positions 219 to 225 (AEKSHED) match the KxHxx motif.

The protein belongs to the INSIG family. As to quaternary structure, interacts with SCAP; interaction is direct and only takes place in the presence of sterols; it prevents interaction between SCAP and the coat protein complex II (COPII). Associates with the SCAP-SREBP complex; association is mediated via its interaction with SCAP and only takes place in the presence of sterols.

The protein localises to the endoplasmic reticulum membrane. In terms of biological role, oxysterol-binding protein that mediates feedback control of cholesterol synthesis by controlling both endoplasmic reticulum to Golgi transport of SCAP and degradation of HMGCR. Acts as a negative regulator of cholesterol biosynthesis by mediating the retention of the SCAP-SREBP complex in the endoplasmic reticulum, thereby blocking the processing of sterol regulatory element-binding proteins (SREBPs). Binds oxysterol, including 22-hydroxycholesterol, 24-hydroxycholesterol, 25-hydroxycholesterol and 27-hydroxycholesterol, regulating interaction with SCAP and retention of the SCAP-SREBP complex in the endoplasmic reticulum. In presence of oxysterol, interacts with SCAP, retaining the SCAP-SREBP complex in the endoplasmic reticulum, thereby preventing SCAP from escorting SREBPs to the Golgi. Sterol deprivation reduces oxysterol-binding, disrupting the interaction between INSIG2 and SCAP, thereby promoting Golgi transport of the SCAP-SREBP complex, followed by processing and nuclear translocation of SREBPs. Also regulates cholesterol synthesis by regulating degradation of HMGCR. The polypeptide is Insulin-induced gene 2 protein (Gallus gallus (Chicken)).